The primary structure comprises 331 residues: Retinol dehydrogenase 13 (331 aa).

Ser2 is subject to N-acetylserine. Residue 45 to 51 (GANTGIG) participates in NADP(+) binding. Ser174 is a substrate binding site. Tyr200 acts as the Proton acceptor in catalysis. The residue at position 323 (Ser323) is a Phosphoserine.

It belongs to the short-chain dehydrogenases/reductases (SDR) family. In terms of tissue distribution, widely expressed. In the retina, detected in the inner segment of the photoreceptor cells. Weak signals are observed in a small population of inner nuclear neurons and the inner plexiform layer.

The protein resides in the mitochondrion inner membrane. It carries out the reaction all-trans-retinol + NADP(+) = all-trans-retinal + NADPH + H(+). It participates in cofactor metabolism; retinol metabolism. Functionally, retinol dehydrogenase with a clear preference for NADP. Oxidizes all-trans-retinol, but seems to reduce all-trans-retinal with much higher efficiency. Has no activity toward steroids. This chain is Retinol dehydrogenase 13 (RDH13), found in Homo sapiens (Human).